Consider the following 300-residue polypeptide: Ribosomal RNA small subunit methyltransferase H (300 aa).

S-adenosyl-L-methionine is bound by residues 46–48 (GGH), D65, F92, D107, and Q114.

The protein belongs to the methyltransferase superfamily. RsmH family.

The protein localises to the cytoplasm. It catalyses the reaction cytidine(1402) in 16S rRNA + S-adenosyl-L-methionine = N(4)-methylcytidine(1402) in 16S rRNA + S-adenosyl-L-homocysteine + H(+). In terms of biological role, specifically methylates the N4 position of cytidine in position 1402 (C1402) of 16S rRNA. This Prochlorococcus marinus (strain MIT 9301) protein is Ribosomal RNA small subunit methyltransferase H.